The sequence spans 860 residues: Glucans biosynthesis glucosyltransferase H (860 aa).

6 helical membrane-spanning segments follow: residues 146 to 166 (ILLILMLGQTIVAGWYMKGIL), 200 to 220 (ILLLFGILFCWVSAGFWTALM), 519 to 539 (VFLTGVMSYLSAPLWFFFLVL), 576 to 596 (LFSTTIVLLFLPKLLSVILIW), 610 to 630 (TVSMLLEMLFSVLLAPVRMLF), and 686 to 706 (FLWWLAPIVVSLMLSIPVSVI).

Belongs to the glycosyltransferase 2 family. OpgH subfamily.

The protein resides in the cell inner membrane. It participates in glycan metabolism; osmoregulated periplasmic glucan (OPG) biosynthesis. Functionally, involved in the biosynthesis of osmoregulated periplasmic glucans (OPGs). In Pseudomonas savastanoi pv. phaseolicola (strain 1448A / Race 6) (Pseudomonas syringae pv. phaseolicola (strain 1448A / Race 6)), this protein is Glucans biosynthesis glucosyltransferase H.